Reading from the N-terminus, the 422-residue chain is MSRQINAVTPSSSSRRHRLSLSRRRINFTTSPEALPSSSSRSQPSSSSRSQPYSSSRSQPYSSSRRRRRQERSQEQRVSEDNVQIIGNANEPLTRTYHSQGVTYHVHGQVNISNDDPLLSQEDDTIESVDRASQQYQNSIASETAAQRALQRGLDLESQLMSEISPRSPAYSPPYPSNDVLSQSPDLFDSPQSPQQHELELEDEDEEEEEEEGEEVEVSCNICFTTLKDTKNVDSSFVTSIDCNHAVCFKCYVRIIMDNSTYKCFCSASSSDFRVYNKHGYVEFMPLTLIRNRDSIKQHWRELLENNTVNNRIIDLNDVERLERERSELRAKNSQVEHKMTMLNCDYAMLKHEHKITELKLKWANRDLEEFTKKTQELQSTVNDLQEQLRKQVAESQAKFSQFERRNSELVAELYTIEMSKP.

Residues 1–10 (MSRQINAVTP) show a composition bias toward polar residues. Disordered stretches follow at residues 1-86 (MSRQ…VQII) and 165-215 (SPRS…EGEE). Basic residues predominate over residues 14–26 (SRRHRLSLSRRRI). Positions 36 to 63 (PSSSSRSQPSSSSRSQPYSSSRSQPYSS) are enriched in low complexity. Basic and acidic residues predominate over residues 71–80 (ERSQEQRVSE). Polar residues predominate over residues 179-196 (DVLSQSPDLFDSPQSPQQ). The span at 200–215 (ELEDEDEEEEEEEGEE) shows a compositional bias: acidic residues. The RING-type; degenerate zinc finger occupies 220 to 268 (CNICFTTLKDTKNVDSSFVTSIDCNHAVCFKCYVRIIMDNSTYKCFCSA). Residues 314–414 (IDLNDVERLE…RRNSELVAEL (101 aa)) are a coiled coil.

Belongs to the alphabaculovirus IE2 protein family. Homooligomer. Auto-ubiquitinated.

Its subcellular location is the host nucleus. The catalysed reaction is S-ubiquitinyl-[E2 ubiquitin-conjugating enzyme]-L-cysteine + [acceptor protein]-L-lysine = [E2 ubiquitin-conjugating enzyme]-L-cysteine + N(6)-ubiquitinyl-[acceptor protein]-L-lysine.. Functionally, RING-finger E3 ubiquitin ligase that plays an important regulatory role during the initial stages of infection. Migrates to specific nuclear foci early in infection supposely to prepare the sites for viral replication by targeting and ubiquitinating host proteins. The chain is E3 ubiquitin-protein ligase IE2 (IE2) from Bombyx mori nuclear polyhedrosis virus (BmNPV).